A 199-amino-acid chain; its full sequence is Ras-related protein Rab-7b (199 aa).

Residues glycine 15–threonine 22, tyrosine 34–threonine 40, aspartate 63–glutamine 67, asparagine 124–aspartate 127, and alanine 154–lysine 155 contribute to the GTP site. Short sequence motifs (switch) lie at residues tyrosine 28 to leucine 41 and glutamine 67 to aspartate 82. A Phosphoserine modification is found at serine 186. S-geranylgeranyl cysteine attachment occurs at residues cysteine 198 and cysteine 199.

This sequence belongs to the small GTPase superfamily. Rab family. In terms of tissue distribution, expressed in heart, placenta, lung, skeletal muscle and peripheral blood leukocyte.

It localises to the late endosome. The protein resides in the lysosome. The protein localises to the golgi apparatus. Its subcellular location is the trans-Golgi network. It is found in the cytoplasmic vesicle. It localises to the phagosome. The protein resides in the phagosome membrane. Functionally, controls vesicular trafficking from endosomes to the trans-Golgi network (TGN). Acts as a negative regulator of TLR9 signaling and can suppress TLR9-triggered TNFA, IL6, and IFNB production in macrophages by promoting TLR9 lysosomal degradation. Also negatively regulates TLR4 signaling in macrophages by promoting lysosomal degradation of TLR4. Promotes megakaryocytic differentiation by increasing NF-kappa-B-dependent IL6 production and subsequently enhancing the association of STAT3 with GATA1. Not involved in the regulation of the EGF- and EGFR degradation pathway. The polypeptide is Ras-related protein Rab-7b (RAB7B) (Homo sapiens (Human)).